Here is a 327-residue protein sequence, read N- to C-terminus: Probable cell division protein WhiA (327 aa).

Residues Ser-275–Lys-308 constitute a DNA-binding region (H-T-H motif). Residues Asp-304–Ala-327 are disordered.

The protein belongs to the WhiA family.

Functionally, involved in cell division and chromosome segregation. This Mycobacterium sp. (strain MCS) protein is Probable cell division protein WhiA.